A 154-amino-acid chain; its full sequence is Myoglobin (154 aa).

The 147-residue stretch at 2–148 (GLSDGEWQLV…FRKDMASNYK (147 aa)) folds into the Globin domain. The residue at position 4 (Ser4) is a Phosphoserine. His65 is a binding site for nitrite. His65 lines the O2 pocket. Position 68 is a phosphothreonine (Thr68). His94 serves as a coordination point for heme b.

This sequence belongs to the globin family. In terms of assembly, monomeric.

The protein resides in the cytoplasm. The protein localises to the sarcoplasm. It catalyses the reaction Fe(III)-heme b-[protein] + nitric oxide + H2O = Fe(II)-heme b-[protein] + nitrite + 2 H(+). It carries out the reaction H2O2 + AH2 = A + 2 H2O. In terms of biological role, monomeric heme protein which primary function is to store oxygen and facilitate its diffusion within muscle tissues. Reversibly binds oxygen through a pentacoordinated heme iron and enables its timely and efficient release as needed during periods of heightened demand. Depending on the oxidative conditions of tissues and cells, and in addition to its ability to bind oxygen, it also has a nitrite reductase activity whereby it regulates the production of bioactive nitric oxide. Under stress conditions, like hypoxia and anoxia, it also protects cells against reactive oxygen species thanks to its pseudoperoxidase activity. This is Myoglobin (MB) from Pongo pygmaeus (Bornean orangutan).